A 311-amino-acid chain; its full sequence is MRKIVIGTRRSKLALTQTNWVIDQLKQLGVPYEFEVKEIVTKGDRILDVTLSKVGGKGLFVKEIEAALRSGEIDVAVHSMKDVPSELLEEFTLAAITEREDPRDVLVSENGHTLDELPAGAIVGTSSLRRSAQILHRRPDVQVKWIRGNVETRLRKLKEEDFSAIVLAAAGLKRLGYGEDVITEYLDKDVCLPAIGQGALGLECRVDDVETTELLAKLHHEETGKAVLAERAFLKEMNGGCQVPIGGYATVLEDGAVFLTGLVGSPDGKTILKEGKCGMVADELGKEVSSLLTAQGAGAILEKVRSELEGS.

Cysteine 241 carries the S-(dipyrrolylmethanemethyl)cysteine modification.

This sequence belongs to the HMBS family. Monomer. It depends on dipyrromethane as a cofactor.

It catalyses the reaction 4 porphobilinogen + H2O = hydroxymethylbilane + 4 NH4(+). Its pathway is porphyrin-containing compound metabolism; protoporphyrin-IX biosynthesis; coproporphyrinogen-III from 5-aminolevulinate: step 2/4. Tetrapolymerization of the monopyrrole PBG into the hydroxymethylbilane pre-uroporphyrinogen in several discrete steps. In Shouchella clausii (strain KSM-K16) (Alkalihalobacillus clausii), this protein is Porphobilinogen deaminase.